The sequence spans 322 residues: 4-hydroxythreonine-4-phosphate dehydrogenase (322 aa).

2 residues coordinate substrate: histidine 131 and threonine 132. Residues histidine 161, histidine 206, and histidine 259 each contribute to the a divalent metal cation site. Substrate contacts are provided by lysine 267, asparagine 276, and arginine 285.

It belongs to the PdxA family. Homodimer. A divalent metal cation serves as cofactor.

It is found in the cytoplasm. The catalysed reaction is 4-(phosphooxy)-L-threonine + NAD(+) = 3-amino-2-oxopropyl phosphate + CO2 + NADH. Its pathway is cofactor biosynthesis; pyridoxine 5'-phosphate biosynthesis; pyridoxine 5'-phosphate from D-erythrose 4-phosphate: step 4/5. Its function is as follows. Catalyzes the NAD(P)-dependent oxidation of 4-(phosphooxy)-L-threonine (HTP) into 2-amino-3-oxo-4-(phosphooxy)butyric acid which spontaneously decarboxylates to form 3-amino-2-oxopropyl phosphate (AHAP). This chain is 4-hydroxythreonine-4-phosphate dehydrogenase, found in Sulfurihydrogenibium sp. (strain YO3AOP1).